We begin with the raw amino-acid sequence, 358 residues long: 3-dehydroquinate synthase (358 aa).

NAD(+) is bound by residues 69–74 (DGEAHK), 103–107 (GVIGD), 127–128 (TT), Lys140, Lys149, and 167–170 (CLRT). Zn(2+) is bound by residues Glu182, His245, and His262.

It belongs to the sugar phosphate cyclases superfamily. Dehydroquinate synthase family. Co(2+) serves as cofactor. Zn(2+) is required as a cofactor. The cofactor is NAD(+).

The protein resides in the cytoplasm. It carries out the reaction 7-phospho-2-dehydro-3-deoxy-D-arabino-heptonate = 3-dehydroquinate + phosphate. It functions in the pathway metabolic intermediate biosynthesis; chorismate biosynthesis; chorismate from D-erythrose 4-phosphate and phosphoenolpyruvate: step 2/7. Functionally, catalyzes the conversion of 3-deoxy-D-arabino-heptulosonate 7-phosphate (DAHP) to dehydroquinate (DHQ). This chain is 3-dehydroquinate synthase, found in Tolumonas auensis (strain DSM 9187 / NBRC 110442 / TA 4).